Reading from the N-terminus, the 222-residue chain is Triosephosphate isomerase (222 aa).

Position 9-11 (9-11 (NFK)) interacts with substrate. The Electrophile role is filled by His-93. Glu-141 (proton acceptor) is an active-site residue. Substrate-binding positions include Ile-146, Gly-181, and 202–203 (AS).

This sequence belongs to the triosephosphate isomerase family. In terms of assembly, homotetramer; dimer of dimers.

Its subcellular location is the cytoplasm. It catalyses the reaction D-glyceraldehyde 3-phosphate = dihydroxyacetone phosphate. The protein operates within carbohydrate biosynthesis; gluconeogenesis. It participates in carbohydrate degradation; glycolysis; D-glyceraldehyde 3-phosphate from glycerone phosphate: step 1/1. In terms of biological role, involved in the gluconeogenesis. Catalyzes stereospecifically the conversion of dihydroxyacetone phosphate (DHAP) to D-glyceraldehyde-3-phosphate (G3P). The chain is Triosephosphate isomerase from Methanothermus fervidus (strain ATCC 43054 / DSM 2088 / JCM 10308 / V24 S).